A 198-amino-acid chain; its full sequence is Putative manganese efflux pump MntP (198 aa).

Transmembrane regions (helical) follow at residues 3–23 (SIEL…VAIC), 37–57 (VLTG…GYLL), 65–85 (ITSI…INMI), 105–127 (SLTV…FAFL), 131–153 (IIPA…VKIG), and 171–191 (ILIG…SFVF).

The protein belongs to the MntP (TC 9.B.29) family.

Its subcellular location is the cell membrane. Probably functions as a manganese efflux pump. The polypeptide is Putative manganese efflux pump MntP (Acetivibrio thermocellus (strain ATCC 27405 / DSM 1237 / JCM 9322 / NBRC 103400 / NCIMB 10682 / NRRL B-4536 / VPI 7372) (Clostridium thermocellum)).